Reading from the N-terminus, the 754-residue chain is Elongation factor G-2, mitochondrial (754 aa).

The 278-residue stretch at 63–340 folds into the tr-type G domain; the sequence is DKLRNIGISA…GVVSFLPSPN (278 aa). Residues 72–79, 139–143, and 193–196 each bind GTP; these read AHIDSGKT, DTPGH, and NKLD.

Belongs to the TRAFAC class translation factor GTPase superfamily. Classic translation factor GTPase family. EF-G/EF-2 subfamily. Expressed in cotyledons and adult leaves at the same levels.

It is found in the mitochondrion. It functions in the pathway protein biosynthesis; polypeptide chain elongation. In terms of biological role, mitochondrial GTPase that catalyzes the GTP-dependent ribosomal translocation step during translation elongation. During this step, the ribosome changes from the pre-translocational (PRE) to the post-translocational (POST) state as the newly formed A-site-bound peptidyl-tRNA and P-site-bound deacylated tRNA move to the P and E sites, respectively. Catalyzes the coordinated movement of the two tRNA molecules, the mRNA and conformational changes in the ribosome. This chain is Elongation factor G-2, mitochondrial (MEFG2), found in Arabidopsis thaliana (Mouse-ear cress).